A 353-amino-acid polypeptide reads, in one-letter code: Uroporphyrinogen decarboxylase (353 aa).

Residues 30 to 34 (RQAGR), Asp-79, Tyr-154, Ser-209, and His-332 contribute to the substrate site.

This sequence belongs to the uroporphyrinogen decarboxylase family. Homodimer.

It localises to the cytoplasm. It catalyses the reaction uroporphyrinogen III + 4 H(+) = coproporphyrinogen III + 4 CO2. The protein operates within porphyrin-containing compound metabolism; protoporphyrin-IX biosynthesis; coproporphyrinogen-III from 5-aminolevulinate: step 4/4. Functionally, catalyzes the decarboxylation of four acetate groups of uroporphyrinogen-III to yield coproporphyrinogen-III. In Mycobacterium marinum (strain ATCC BAA-535 / M), this protein is Uroporphyrinogen decarboxylase.